The following is a 367-amino-acid chain: Damage-control phosphatase At2g17340 (367 aa).

At Met-1 the chain carries N-acetylmethionine. Residues Asp-220, Asn-221, and Asp-256 each coordinate Mn(2+). The Subfamily II EGMGR motif signature appears at 318–322; the sequence is EGMGR.

This sequence belongs to the damage-control phosphatase family. Phosphopantetheine phosphatase II subfamily. Multimer. The cofactor is Mn(2+). Ni(2+) is required as a cofactor.

Activity is strongly promoted by Co(2+), Ni(2+), Mg(2+), Cu(2+) and Mn(2+). Activity is inhibited by EDTA. Its function is as follows. Metal-dependent phosphatase with probable damage-control functions. Shows phosphatase activity against several substrates, including sugar phosphates and p-nitrophenyl phosphate(pNPP). Prefers sugar phosphate substrates, including the extremely potent glycating agents ribose-5-phosphate and erythrose-4-phosphate. This is Damage-control phosphatase At2g17340 from Arabidopsis thaliana (Mouse-ear cress).